The chain runs to 382 residues: Flap endonuclease 1 (382 aa).

The N-domain stretch occupies residues 1–105 (MGIKGLNAII…HELTKRSSRR (105 aa)). Mg(2+) is bound at residue D34. Residues R47 and R71 each contribute to the DNA site. Residues D87, E156, E158, D177, and D179 each coordinate Mg(2+). An I-domain region spans residues 120–251 (EKMKQERRLV…VTALKLIKTH (132 aa)). Residue E156 participates in DNA binding. Residues G229 and D231 each coordinate DNA. D231 serves as a coordination point for Mg(2+). The tract at residues 339–347 (IQGRLDGFF) is interaction with PCNA. A disordered region spans residues 358–382 (AAAAKRAQENKKLNKNKNKVTKGRR). Positions 370-382 (LNKNKNKVTKGRR) are enriched in basic residues.

This sequence belongs to the XPG/RAD2 endonuclease family. FEN1 subfamily. As to quaternary structure, interacts with PCNA. Three molecules of RAD27 bind to one PCNA trimer with each molecule binding to one PCNA monomer. PCNA stimulates the nuclease activity without altering cleavage specificity. The cofactor is Mg(2+). Phosphorylated. Phosphorylation upon DNA damage induces relocalization to the nuclear plasma.

Its subcellular location is the nucleus. It is found in the nucleolus. The protein resides in the nucleoplasm. It localises to the mitochondrion. In terms of biological role, structure-specific nuclease with 5'-flap endonuclease and 5'-3' exonuclease activities involved in DNA replication and repair. During DNA replication, cleaves the 5'-overhanging flap structure that is generated by displacement synthesis when DNA polymerase encounters the 5'-end of a downstream Okazaki fragment. It enters the flap from the 5'-end and then tracks to cleave the flap base, leaving a nick for ligation. Also involved in the long patch base excision repair (LP-BER) pathway, by cleaving within the apurinic/apyrimidinic (AP) site-terminated flap. Acts as a genome stabilization factor that prevents flaps from equilibrating into structures that lead to duplications and deletions. Also possesses 5'-3' exonuclease activity on nicked or gapped double-stranded DNA, and exhibits RNase H activity. Also involved in replication and repair of rDNA and in repairing mitochondrial DNA. The sequence is that of Flap endonuclease 1 from Saccharomyces cerevisiae (strain RM11-1a) (Baker's yeast).